Consider the following 294-residue polypeptide: Glycine N-acyltransferase-like protein 2 (294 aa).

N6-acetyllysine is present on Lys-19.

The protein belongs to the glycine N-acyltransferase family. Post-translationally, acetylation at Lys-19 drastically decreases the production of N-oleoyl and N-arachidonoyl glycines. As to expression, expressed at highest levels in salivary gland and trachea. Also detected in thyroid gland, spinal cord, prostate, lung and fetal brain.

It localises to the endoplasmic reticulum. The catalysed reaction is an acyl-CoA + glycine = an N-acylglycine + CoA + H(+). It carries out the reaction (9Z)-hexadecenoyl-CoA + glycine = N-(9Z-hexadecenoyl)-glycine + CoA + H(+). It catalyses the reaction octadecanoyl-CoA + glycine = N-octadecanoylglycine + CoA + H(+). The enzyme catalyses (5Z,8Z,11Z,14Z)-eicosatetraenoyl-CoA + glycine = N-(5Z,8Z,11Z,14Z)-eicosatetraenoyl-glycine + CoA + H(+). The catalysed reaction is (9Z)-octadecenoyl-CoA + glycine = N-(9Z-octadecenoyl)glycine + CoA + H(+). It carries out the reaction octanoyl-CoA + glycine = N-octanoylglycine + CoA + H(+). It catalyses the reaction decanoyl-CoA + glycine = N-decanoylglycine + CoA + H(+). The enzyme catalyses tetradecanoyl-CoA + glycine = N-tetradecanoylglycine + CoA + H(+). The catalysed reaction is dodecanoyl-CoA + glycine = N-dodecanoylglycine + CoA + H(+). It carries out the reaction (9Z,12Z)-octadecadienoyl-CoA + glycine = N-(9Z,12Z-octadecadienoyl)-glycine + CoA + H(+). It catalyses the reaction a fatty acyl-CoA + glycine = an N-(fatty acyl)-glycine + CoA + H(+). In terms of biological role, mitochondrial acyltransferase which transfers the acyl group to the N-terminus of glycine. Conjugates numerous substrates, such as arachidonoyl-CoA and saturated medium and long-chain acyl-CoAs ranging from chain-length C8:0-CoA to C18:0-CoA, to form a variety of N-acylglycines. Shows a preference for monounsaturated fatty acid oleoyl-CoA (C18:1-CoA) as an acyl donor. Does not exhibit any activity toward C22:6-CoA and chenodeoxycholoyl-CoA, nor toward serine or alanine. The chain is Glycine N-acyltransferase-like protein 2 from Homo sapiens (Human).